The sequence spans 207 residues: 5-nitrosalicylic acid 1,2-dioxygenase (207 aa).

Residues 85 to 151 (QLIHPGEEVT…GDKDTLMYVI (67 aa)) enclose the Cupin type-2 domain.

The enzyme catalyses 5-nitrosalicylate + O2 = 2-oxo-3-(5-oxofuran-2-ylidene)propanoate + nitrite + H(+). Dioxygenase that catalyzes the cleavage of the aromatic ring of 5-nitrosalicylate (5NSA) without prior removal of the nitro group in biodegradation of 5-nitroanthranilate. The chain is 5-nitrosalicylic acid 1,2-dioxygenase (naaB) from Bradyrhizobium sp.